Here is a 611-residue protein sequence, read N- to C-terminus: Depudecin biosynthesis cluster-specific transcription activator DEP6 (611 aa).

Positions C17–C44 form a DNA-binding region, zn(2)-C6 fungal-type. The disordered stretch occupies residues D76–S125. A compositionally biased stretch (low complexity) spans P78–A113.

It is found in the nucleus. In terms of biological role, transcription factor that positively regulates the expression of the gene cluster that mediates the biosynthesis of depudecin, a highly oxidized eleven-carbon linear polyketide that acts as a histone deacetylase (HDAC) inhibitor and makes a small contribution to pathogenesis. The chain is Depudecin biosynthesis cluster-specific transcription activator DEP6 from Fusarium langsethiae.